The following is a 493-amino-acid chain: Glycerol kinase (493 aa).

Threonine 12 contributes to the ADP binding site. The ATP site is built by threonine 12, threonine 13, and serine 14. Threonine 12 contacts sn-glycerol 3-phosphate. Arginine 16 provides a ligand contact to ADP. The sn-glycerol 3-phosphate site is built by arginine 82, glutamate 83, tyrosine 132, and aspartate 239. Residues arginine 82, glutamate 83, tyrosine 132, aspartate 239, and glutamine 240 each coordinate glycerol. Positions 261 and 303 each coordinate ADP. Residues threonine 261, glycine 303, glutamine 307, and glycine 402 each coordinate ATP. Residues glycine 402 and asparagine 406 each coordinate ADP.

The protein belongs to the FGGY kinase family.

It catalyses the reaction glycerol + ATP = sn-glycerol 3-phosphate + ADP + H(+). It participates in polyol metabolism; glycerol degradation via glycerol kinase pathway; sn-glycerol 3-phosphate from glycerol: step 1/1. Its function is as follows. Key enzyme in the regulation of glycerol uptake and metabolism. Catalyzes the phosphorylation of glycerol to yield sn-glycerol 3-phosphate. This is Glycerol kinase from Thermococcus gammatolerans (strain DSM 15229 / JCM 11827 / EJ3).